Consider the following 180-residue polypeptide: Thebaine synthase 1 (180 aa).

Serine 96 provides a ligand contact to thebaine. Histidine 111 acts as the Proton acceptor in catalysis. Position 127 (threonine 127) interacts with thebaine.

This sequence belongs to the MLP family. In terms of assembly, homodimer (allosteric) and oligomers. In terms of tissue distribution, expressed in poppy latex.

It catalyses the reaction (7S)-O-acetylsalutaridinol = thebaine + acetate + H(+). It functions in the pathway alkaloid biosynthesis; morphine biosynthesis. Its function is as follows. Catalyzes the formation of thebaine from (7S)-salutaridinol 7-O-acetate at the expense of labile hydroxylated by-products, which are preferentially produced by spontaneous allylic elimination. The sequence is that of Thebaine synthase 1 from Papaver somniferum (Opium poppy).